A 214-amino-acid polypeptide reads, in one-letter code: Leucyl/phenylalanyl-tRNA--protein transferase (214 aa).

The segment at 194–214 is disordered; sequence FAPPGYSPDPASVVQRSSQTS.

Belongs to the L/F-transferase family.

The protein resides in the cytoplasm. The catalysed reaction is N-terminal L-lysyl-[protein] + L-leucyl-tRNA(Leu) = N-terminal L-leucyl-L-lysyl-[protein] + tRNA(Leu) + H(+). It catalyses the reaction N-terminal L-arginyl-[protein] + L-leucyl-tRNA(Leu) = N-terminal L-leucyl-L-arginyl-[protein] + tRNA(Leu) + H(+). It carries out the reaction L-phenylalanyl-tRNA(Phe) + an N-terminal L-alpha-aminoacyl-[protein] = an N-terminal L-phenylalanyl-L-alpha-aminoacyl-[protein] + tRNA(Phe). Functions in the N-end rule pathway of protein degradation where it conjugates Leu, Phe and, less efficiently, Met from aminoacyl-tRNAs to the N-termini of proteins containing an N-terminal arginine or lysine. This chain is Leucyl/phenylalanyl-tRNA--protein transferase, found in Cereibacter sphaeroides (strain ATCC 17025 / ATH 2.4.3) (Rhodobacter sphaeroides).